The following is a 536-amino-acid chain: MELSPRSPPEMLEESDCPSPLELKSAPSKKMWIKLRSLLRYMVKQLENGEINIEELKKNLEYTASLLEAVYIDETRQILDTEDELQELRSDAVPSEVRDWLASTFTQQARAKGRRAEEKPKFRSIVHAVQAGIFVERMFRRTYTSVGPTYSTAVLNCLKNLDLWCFDVFSLNQAADDHALRTIVFELLTRHNLISRFKIPTVFLMSFLDALETGYGKYKNPYHNQIHAADVTQTVHCFLLRTGMVHCLSEIELLAIIFAAAIHDYEHTGTTNSFHIQTKSECAIVYNDRSVLENHHISSVFRLMQDDEMNIFINLTKDEFVELRALVIEMVLATDMSCHFQQVKTMKTALQQLERIDKPKALSLLLHAADISHPTKQWLVHSRWTKALMEEFFRQGDKEAELGLPFSPLCDRTSTLVAQSQIGFIDFIVEPTFSVLTDVAEKSVQPLADEDSKSKNQPSFQWRQPSLDVEVGDPNPDVVSFRSTWVKRIQENKQKWKERAASGITNQMSIDELSPCEEEAPPSPAEDEHNQNGNLD.

A disordered region spans residues Met1–Pro20. Ser7 and Ser15 each carry phosphoserine. 2 calmodulin-binding regions span residues Pro27 to Glu47 and Glu118 to Arg141. Residues Val146–Gly503 enclose the PDEase domain. His223 functions as the Proton donor in the catalytic mechanism. Zn(2+) is bound by residues His227, His263, Asp264, and Asp370. Asp264 lines the Mg(2+) pocket. Disordered regions lie at residues Leu447–Pro474 and Gln494–Asp536. A compositionally biased stretch (polar residues) spans Lys455 to Gln464. Phosphoserine is present on residues Ser466 and Ser514.

Belongs to the cyclic nucleotide phosphodiesterase family. PDE1 subfamily. Homodimer. Zn(2+) serves as cofactor. It depends on Mg(2+) as a cofactor.

The protein resides in the cytoplasm. It localises to the cytosol. It carries out the reaction a nucleoside 3',5'-cyclic phosphate + H2O = a nucleoside 5'-phosphate + H(+). It catalyses the reaction 3',5'-cyclic GMP + H2O = GMP + H(+). The enzyme catalyses 3',5'-cyclic AMP + H2O = AMP + H(+). With respect to regulation, type I PDE are activated by the binding of calmodulin in the presence of Ca(2+). In terms of biological role, cyclic nucleotide phosphodiesterase with a dual specificity for the second messengers cAMP and cGMP, which are key regulators of many important physiological processes. Has a preference for cGMP as a substrate. This Homo sapiens (Human) protein is Dual specificity calcium/calmodulin-dependent 3',5'-cyclic nucleotide phosphodiesterase 1B.